The following is a 332-amino-acid chain: Zinc finger protein CONSTANS-LIKE 13 (332 aa).

Zn(2+) contacts are provided by cysteine 13, cysteine 16, cysteine 36, histidine 41, cysteine 56, cysteine 59, cysteine 79, and histidine 84. The B box-type 1; atypical zinc finger occupies 13-55 (CDYCDSSVALVYCKADSAKLCLACDKQVHVANQLFAKHFRSLL). The B box-type 2; atypical zinc-finger motif lies at 56 to 96 (CDSCNESPSSLFCETERSVLCQNCDWQHHTASSSLHSRRPF). One can recognise a CCT domain in the interval 287–329 (RNSALSRYKEKKKSRRYEKHIRYESRKVRAESRTRIRGRFAKA).

This sequence belongs to the CONSTANS family.

It localises to the nucleus. In Arabidopsis thaliana (Mouse-ear cress), this protein is Zinc finger protein CONSTANS-LIKE 13 (COL13).